The following is a 720-amino-acid chain: Asp/Glu-specific dipeptidyl-peptidase (720 aa).

The signal sequence occupies residues methionine 1–alanine 21. An intrachain disulfide couples cysteine 69 to cysteine 86. Active-site charge relay system residues include histidine 85, aspartate 227, and serine 655.

It belongs to the peptidase S46 family. In terms of assembly, homodimer.

The protein localises to the cell surface. Enzyme activity is completely blocked by diisopropyl-fluorophosphates, moderately by phenylmethylsulfonyl fluoride (PMSF) and 4-(2-methyl)benzenesulfonyl fluoride, and slightly by pepstatin in vitro. In terms of biological role, catalyzes the removal of dipeptides from the N-terminus of oligopeptides. Shows a strict specificity for acidic residues (Asp or Glu) in the P1 position, and has a hydrophobic residue preference at the P2 position. Preferentially cleaves the synthetic substrate Leu-Asp-methylcoumaryl-7-amide (Leu-Asp-MCA) as compared to Leu-Glu-MCA. Is involved in amino acid metabolism and bacterial growth of asaccharolytic P.gingivalis, that utilizes amino acids from extracellular proteinaceous nutrients as energy and carbon sources. The polypeptide is Asp/Glu-specific dipeptidyl-peptidase (Porphyromonas gingivalis (strain ATCC 33277 / DSM 20709 / CIP 103683 / JCM 12257 / NCTC 11834 / 2561)).